The following is a 314-amino-acid chain: NF-kappa-B inhibitor alpha (314 aa).

A disordered region spans residues 1–40 (MFQPAGHGQDWAMEGPRDGLKKERLVDDRHDSGLDSMKDE). Residues 15–40 (GPRDGLKKERLVDDRHDSGLDSMKDE) are compositionally biased toward basic and acidic residues. Residue K21 forms a Glycyl lysine isopeptide (Lys-Gly) (interchain with G-Cter in SUMO); alternate linkage. A Glycyl lysine isopeptide (Lys-Gly) (interchain with G-Cter in ubiquitin); alternate cross-link involves residue K21. K22 participates in a covalent cross-link: Glycyl lysine isopeptide (Lys-Gly) (interchain with G-Cter in ubiquitin). The Destruction motif motif lies at 30 to 36 (HDSGLDS). S32 bears the Phosphoserine; by IKKB mark. The residue at position 36 (S36) is a Phosphoserine; by IKKA, IKKB, IKKE and TBK1. Y42 is modified (phosphotyrosine). Positions 45–54 (MVKELREIRL) match the Nuclear export signal motif. ANK repeat units lie at residues 73–103 (DGDSFLHLAIIHEEKPLTMEVIGQVKGDLAF), 110–139 (LQQTPLHLAVITNQPGIAEALLKAGCDPEL), 143–172 (RGNTPLHLACEQGCLASVAVLTQTCTPQHL), 182–211 (NGHTCLHLASIHGYLAIVEHLVTLGADVNA), and 216–245 (NGRTALHLAVDLQNPDLVSLLLKCGADVNR). A Nuclear import signal motif is present at residues 110–120 (LQQTPLHLAVI). A (3S)-3-hydroxyasparagine; by HIF1AN mark is found at N210 and N244. A phosphoserine; by CK2 mark is found at S283 and S288. T291 is modified (phosphothreonine; by CK2). Position 293 is a phosphoserine; by CK2 (S293). Position 296 is a phosphothreonine (T296).

The protein belongs to the NF-kappa-B inhibitor family. In terms of assembly, interacts with RELA; the interaction requires the nuclear import signal. Part of a 70-90 kDa complex at least consisting of CHUK, IKBKB, NFKBIA, RELA, ELP1 and MAP3K14. Interacts with NKIRAS1 and NKIRAS2. Interacts with RWDD3; the interaction enhances sumoylation. Interacts with PRMT2. Interacts with PRKACA in platelets; this interaction is disrupted by thrombin and collagen. Interacts with MEFV. Interacts with DDRGK1; positively regulates NFKBIA phosphorylation and degradation. Interacts with HNRNPA2B1; the interaction may be mediated by the RRM2 domain of HNRNPA2B1, and HNRNPA2B1 may interact simultaneously with FAM76B and either NFKBIA or NFKBIE to form a complex. Phosphorylated at Ser-32 and Ser-36 by IKKA/CHUK and IKKB/IKBKB; disables inhibition of NF-kappa-B DNA-binding activity. Phosphorylation at positions 32 and 36 is prerequisite to recognition by the SCF(FBXW11) and SCF(BTRC) complexes, leading to polyubiquitination and subsequent degradation. In terms of processing, polyubiquitinated at Lys-21 and/or Lys-22 following phosphorylation at Ser-32 and Ser-36. Monoubiquitinated at Lys-21 and/or Lys-22 by UBE2D3. Ubiquitin chain elongation is then performed by CDC34 in cooperation with the SCF(FBXW11) E3 ligase complex, building ubiquitin chains from the UBE2D3-primed NFKBIA-linked ubiquitin. The resulting polyubiquitination leads to protein degradation. Also ubiquitinated by the SCF(BTRC) complex following stimulus-dependent phosphorylation at Ser-32 and Ser-36. Deubiquitinated by USP38, leading to NF-kappa-B inhibition. Post-translationally, sumoylated; sumoylation requires the presence of the nuclear import signal. Sumoylation blocks ubiquitination and proteasome-mediated degradation of the protein thereby increasing the protein stability. Hydroxylated by HIF1AN. As to expression, highly expressed in lymph node, thymus followed by liver, brain, muscle, kidney, gastrointestinal and reproductive tract.

The protein resides in the cytoplasm. Its subcellular location is the nucleus. In terms of biological role, inhibits the activity of dimeric NF-kappa-B/REL complexes by trapping REL (RELA/p65 and NFKB1/p50) dimers in the cytoplasm by masking their nuclear localization signals. On cellular stimulation by immune and pro-inflammatory responses, becomes phosphorylated promoting ubiquitination and degradation, enabling the dimeric RELA to translocate to the nucleus and activate transcription. This Mus musculus (Mouse) protein is NF-kappa-B inhibitor alpha (Nfkbia).